The sequence spans 338 residues: Glycerol-3-phosphate dehydrogenase [NAD(P)+] (338 aa).

Residues Trp12, His33, and Lys110 each coordinate NADPH. Residues Lys110, Gly142, and Ser144 each coordinate sn-glycerol 3-phosphate. Ala146 serves as a coordination point for NADPH. Lys197, Asp250, Ser260, Arg261, and Asn262 together coordinate sn-glycerol 3-phosphate. Lys197 serves as the catalytic Proton acceptor. Arg261 is an NADPH binding site. NADPH contacts are provided by Val286 and Glu288.

Belongs to the NAD-dependent glycerol-3-phosphate dehydrogenase family.

The protein resides in the cytoplasm. The catalysed reaction is sn-glycerol 3-phosphate + NAD(+) = dihydroxyacetone phosphate + NADH + H(+). It carries out the reaction sn-glycerol 3-phosphate + NADP(+) = dihydroxyacetone phosphate + NADPH + H(+). The protein operates within membrane lipid metabolism; glycerophospholipid metabolism. In terms of biological role, catalyzes the reduction of the glycolytic intermediate dihydroxyacetone phosphate (DHAP) to sn-glycerol 3-phosphate (G3P), the key precursor for phospholipid synthesis. This is Glycerol-3-phosphate dehydrogenase [NAD(P)+] from Acidobacterium capsulatum (strain ATCC 51196 / DSM 11244 / BCRC 80197 / JCM 7670 / NBRC 15755 / NCIMB 13165 / 161).